Consider the following 414-residue polypeptide: UDP-N-acetylmuramoylalanine--D-glutamate ligase (414 aa).

104 to 110 (GSNGKST) is a binding site for ATP.

The protein belongs to the MurCDEF family.

It localises to the cytoplasm. It carries out the reaction UDP-N-acetyl-alpha-D-muramoyl-L-alanine + D-glutamate + ATP = UDP-N-acetyl-alpha-D-muramoyl-L-alanyl-D-glutamate + ADP + phosphate + H(+). The protein operates within cell wall biogenesis; peptidoglycan biosynthesis. In terms of biological role, cell wall formation. Catalyzes the addition of glutamate to the nucleotide precursor UDP-N-acetylmuramoyl-L-alanine (UMA). This chain is UDP-N-acetylmuramoylalanine--D-glutamate ligase, found in Francisella philomiragia subsp. philomiragia (strain ATCC 25017 / CCUG 19701 / FSC 153 / O#319-036).